The primary structure comprises 207 residues: MTVANWQVRDLTLILRTGEMKSRLEQARTDFGALLSETVYFQPSAIRLGEFDDEYIHSRQELVYVYLREDIARQCALRRNLPSNSSNFGTMATAIPPWLMNARSLNRVMQERCDQGGLVNYYQGPHTNQFFLAIMPSNCFVRFGTDIINNENYGFYARGGNYTEEGEDDDDEMDDEGEAGGAEPRECQIGNLINYPIIALGSCDLSA.

A disordered region spans residues 160-183 (GNYTEEGEDDDDEMDDEGEAGGAE). Acidic residues predominate over residues 164–178 (EEGEDDDDEMDDEGE).

Involved in tumor formation and increases auxin and cytokinin effects in host plants. This chain is Protein 6b (6b), found in Agrobacterium tumefaciens (strain Ach5).